Consider the following 103-residue polypeptide: MATYAIVKTGGKQYKVAVGDLVKVEKIEGEPGTAVSLAPVLVVDGSDLTTDAAKLAKVAVTSEIVEHTKGPKIRIHKFKNKTGYHKRQGHRQPITVLKVTGIK.

The protein belongs to the bacterial ribosomal protein bL21 family. As to quaternary structure, part of the 50S ribosomal subunit. Contacts protein L20.

This protein binds to 23S rRNA in the presence of protein L20. The chain is Large ribosomal subunit protein bL21 from Rhodococcus erythropolis (strain PR4 / NBRC 100887).